The sequence spans 681 residues: T-box-containing protein 2 (681 aa).

A DNA-binding region (T-box) is located at residues 149–323 (LWDQFSRAGT…NNPFAKGFRE (175 aa)). Disordered regions lie at residues 316 to 351 (PFAK…EQRR), 456 to 489 (GITS…NQSN), 521 to 558 (PNIN…LIPG), and 589 to 611 (ESGE…CQSG). Positions 470–489 (NSFTYYNSSSPSSSDSNQSN) are enriched in low complexity. The span at 521-534 (PNINIPNTVETNVH) shows a compositional bias: polar residues.

In terms of assembly, monomer. As to expression, differentiating muscle and tailbud tip.

Its subcellular location is the nucleus. In terms of biological role, involved in the transcriptional regulation of genes required for muscle differentiation. Binds to a palindromic site (called T site) and activates gene transcription when bound to such a site. The chain is T-box-containing protein 2 (T2) from Halocynthia roretzi (Sea squirt).